The following is a 233-amino-acid chain: Merozoite surface protein 1 (233 aa).

The N-terminal stretch at 1–19 is a signal peptide; it reads MKIIFFLCSFLFFIINTQC. The segment covering 58 to 67 has biased composition (polar residues); that stretch reads SGTAVTTSTP. Positions 58–110 are disordered; that stretch reads SGTAVTTSTPGSKGSVASGGSGGSVASGGSVASGGSGNSRRTNPSDNSSDSDA. Residues 74–94 show a composition bias toward gly residues; that stretch reads ASGGSGGSVASGGSVASGGSG. Positions 95–107 are enriched in polar residues; the sequence is NSRRTNPSDNSSD. The N-linked (GlcNAc...) asparagine glycan is linked to asparagine 104.

Forms a complex composed of subunits p83, p30, p38, and p42 which remain non-covalently associated; the complex is formed at the merozoite surface prior to egress from host erythrocytes. Forms a complex composed of processed MSP1 subunits, MSP6 subunit p36 and MSP7; the complex is formed at the merozoite surface prior to egress from host erythrocytes. Within the complex, interacts (via subunit p38) with MSP6 subunit p36 and (via subunits p83, p30 and p38) with MSP7 (via subunit p22). Forms a complex composed of MSP1, MSP6, DBLMSP1 and DBLMSP2. Within the complex, interacts (via subunit p38) with DBLMSP1 and DBLMSP2. Forms a complex composed of MSP1, and rhoptry proteins RhopH3, RAP1 and CLAG9/RhopH3. Within the complex, interacts (via subunits p42 and p19) with RhopH3 (via C-terminus). Forms a complex composed of MSP1, MSP6, MSP7, MSP9 and MSP3; within the complex, MSP6 and MSP9 mediate the binding to the host erythrocyte. Interacts (via subunits p19 and p42) with MSP9; the interaction is direct; MSP1 subunits p19 or p42, and MSP9 form a co-ligand complex that interacts with host SLC4A1/Band 3 protein. May interact with PFD6. Interacts with host spectrin. Post-translationally, the p190 precursor is cleaved by SUB1 prior to merozoite egress into 4 subunits p83, p30, p38, and p42 which remain non-covalently associated. SUB1-mediated proteolytic cleavage occurs in an orderly manner; the first cleavage occurs at the p83/p30 site, followed by cleavage at the p30/p38 site, the last cleavage occurs at the p38/p42 site. The order of cleavage is essential for parasite viability. SUB1-mediated processing is essential for merozoite egress. In a second processing step during erythrocyte invasion, p42 is cleaved by SUB2 into p33 and p19; the latter remains attached to the merozoite surface via its GPI-anchor and stays on the surface during the subsequent ring stage.

It localises to the cell membrane. The protein resides in the secreted. In terms of biological role, during the asexual blood stage, involved in merozoite egress from host erythrocytes possibly via its interaction with the host cytoskeleton protein spectrin resulting in the destabilization of the host cytoskeleton and thus leading to erythrocyte cell membrane rupture. Involved in the binding to host erythrocytes and is required for host erythrocyte invasion. The sequence is that of Merozoite surface protein 1 from Plasmodium falciparum (isolate CDC / Honduras).